The primary structure comprises 474 residues: Putative response regulator NtrX-like (474 aa).

In terms of domain architecture, Response regulatory spans 5–121 (DVLIVDDEES…KLVILLTRAC (117 aa)). Asp54 is modified (4-aspartylphosphate). The Sigma-54 factor interaction domain maps to 143 to 368 (LVGECSVTLK…LRNVVEWTLI (226 aa)). ATP-binding positions include 171-178 (GKVGSGKE) and 231-240 (ANNGTLYIDE).

Member of the two-component regulatory system RC0849/RC0948. The protein is Putative response regulator NtrX-like of Rickettsia conorii (strain ATCC VR-613 / Malish 7).